Consider the following 288-residue polypeptide: uncharacterized protein (288 aa).

A compositionally biased stretch (low complexity) spans 126-136 (VAAPASTPVAP). 2 disordered regions span residues 126–227 (VAAP…VTSV) and 258–288 (KEKD…SSEE). The span at 143–152 (RKEFKNEKWK) shows a compositional bias: basic and acidic residues. Basic residues predominate over residues 153–162 (DKKKQGRRRN). Residues 180–194 (VAEECLQESSSEEGD) are compositionally biased toward acidic residues. A compositionally biased stretch (basic and acidic residues) spans 278 to 288 (TLVHDRISSEE).

It belongs to the chlamydial CPn_0623/CT_504/TC_0791 family.

This is an uncharacterized protein from Chlamydia trachomatis serovar D (strain ATCC VR-885 / DSM 19411 / UW-3/Cx).